A 369-amino-acid polypeptide reads, in one-letter code: CLIP domain-containing serine protease HP8 (369 aa).

The signal sequence occupies residues 1–24; that stretch reads MKTPFEKIRIISCILVIVSTNVVG. The propeptide occupies 25–81; it reads QKCNGGANCIPLEECTDLFQQLKQGNSPQLTRLLRGLHCGFEDLNSPKICCPPEFLA. Residues 26–75 enclose the Clip domain; it reads KCNGGANCIPLEECTDLFQQLKQGNSPQLTRLLRGLHCGFEDLNSPKICC. 8 cysteine pairs are disulfide-bonded: cysteine 27–cysteine 74, cysteine 33–cysteine 63, cysteine 39–cysteine 75, cysteine 105–cysteine 239, cysteine 142–cysteine 158, cysteine 186–cysteine 191, cysteine 286–cysteine 303, and cysteine 313–cysteine 344. One can recognise a Peptidase S1 domain in the interval 113 to 368; the sequence is IFGGIQTEID…FMDWILSKLE (256 aa). The Charge relay system role is filled by histidine 157. The Ca(2+) site is built by glutamate 177, asparagine 179, threonine 182, and aspartate 185. N-linked (GlcNAc...) asparagine glycosylation is present at asparagine 179. Aspartate 219 (charge relay system) is an active-site residue. The active-site Charge relay system is the serine 317.

The protein belongs to the peptidase S1 family. CLIP subfamily. In the active form, heterodimer of a light chain and a heavy chain; disulfide-linked. Proteolytically cleaved for activation. Cleavage produces a light chain and a catalytic heavy chain which remains covalently associated probably through an interchain disulfide bond. As to expression, in larvae, expressed in the fat body and hemocytes.

It is found in the secreted. The protein resides in the cytoplasm. With respect to regulation, inhibited by (p-amidinophenyl) methanesulfonyl fluoride, p-nitrophenyl-p'-guanidinobenzoate, D-phenylalanyl-L-prolyl-L-arginyl chloromethane, leupeptin, antipain and to a lesser extent by antithrombin III. In terms of biological role, endopeptidase with selective post-Arg cleavage site. Functions in the innate immune response to fungal and Gram-positive bacterial infections. Upon pathogen infection promotes nodulation; a cellular defense response in which hemocytes surround and isolate invading pathogens forming aggregates called nodules. Involved in activating nodule formation in response to infection with M.luteus, E.coli or S.cerevisiae. Able to bind the microbes M.luteus, E.coli or S.cerevisiae. According to another report, does not bind microorganisms. The protein is CLIP domain-containing serine protease HP8 of Bombyx mori (Silk moth).